We begin with the raw amino-acid sequence, 378 residues long: Putative F-box only protein 15 (378 aa).

Residues 5 to 52 (KRVYRSLPFELVEEILKKTPAESLNRFKSTCKQWYGIITSKRFMYNHL) form the F-box domain.

The protein is Putative F-box only protein 15 (FBX15) of Arabidopsis thaliana (Mouse-ear cress).